The chain runs to 240 residues: Phosphoribosylaminoimidazole-succinocarboxamide synthase (240 aa).

It belongs to the SAICAR synthetase family.

It carries out the reaction 5-amino-1-(5-phospho-D-ribosyl)imidazole-4-carboxylate + L-aspartate + ATP = (2S)-2-[5-amino-1-(5-phospho-beta-D-ribosyl)imidazole-4-carboxamido]succinate + ADP + phosphate + 2 H(+). Its pathway is purine metabolism; IMP biosynthesis via de novo pathway; 5-amino-1-(5-phospho-D-ribosyl)imidazole-4-carboxamide from 5-amino-1-(5-phospho-D-ribosyl)imidazole-4-carboxylate: step 1/2. This Anoxybacillus flavithermus (strain DSM 21510 / WK1) protein is Phosphoribosylaminoimidazole-succinocarboxamide synthase.